Reading from the N-terminus, the 131-residue chain is Large ribosomal subunit protein bL17 (131 aa).

The protein belongs to the bacterial ribosomal protein bL17 family. As to quaternary structure, part of the 50S ribosomal subunit. Contacts protein L32.

In Burkholderia ambifaria (strain MC40-6), this protein is Large ribosomal subunit protein bL17.